The chain runs to 308 residues: MNWLPEAEAEEHLKGILSGDFFDGLTNHLDCPLEDIDSTNGEGDWVARFQDLEPPPLDMFPALPSDLTSCPKGAARVRIPNNMIPALKQSCSSEALSGINSTPHQSSAPPDIKVSYLFQSLTPVSVLENSYGSLSTQNSGSQRLAFPVKGMRSKRRRPTTVRLSYLFPFEPRKSTPGESVTEGYYSSEQHAKKKRKIHLITHTESSTLESSKSDGIVRICTHCETITTPQWRQGPSGPKTLCNACGVRFKSGRLVPEYRPASSPTFIPSVHSNSHRKIIEMRKKDDEFDTSMIRSDIQKVKQGRKKMV.

Residues 214–268 (DGIVRICTHCETITTPQWRQGPSGPKTLCNACGVRFKSGRLVPEYRPASSPTFIP) form a GATA-type zinc finger.

Belongs to the type IV zinc-finger family. Class A subfamily.

It is found in the nucleus. Its function is as follows. Transcriptional activator that specifically binds 5'-GATA-3' or 5'-GAT-3' motifs within gene promoters. May be involved in the regulation of some light-responsive genes. The polypeptide is GATA transcription factor 10 (GATA10) (Arabidopsis thaliana (Mouse-ear cress)).